Reading from the N-terminus, the 226-residue chain is Prolactin (226 aa).

An N-terminal signal peptide occupies residues 1–29 (MNSQGSAQKAGTLLLLLISNLLFCQNVQP). Cys-33 and Cys-38 are disulfide-bonded. 2 positions are modified to phosphoserine: Ser-53 and Ser-117. 2 disulfide bridges follow: Cys-85-Cys-201 and Cys-218-Cys-226.

It belongs to the somatotropin/prolactin family. As to quaternary structure, interacts with PRLR.

The protein resides in the secreted. Functionally, prolactin acts primarily on the mammary gland by promoting lactation. The chain is Prolactin (Prl) from Mus musculus (Mouse).